Consider the following 88-residue polypeptide: EMBRYO SURROUNDING FACTOR 1-like protein 7 (88 aa).

An N-terminal signal peptide occupies residues 1–22 (MKSSHIALICIVMFSLFALHES). 4 disulfides stabilise this stretch: cysteine 41–cysteine 57, cysteine 46–cysteine 85, cysteine 55–cysteine 81, and cysteine 58–cysteine 68.

Belongs to the MEG family. As to expression, expressed in leaves and flowers.

This chain is EMBRYO SURROUNDING FACTOR 1-like protein 7 (ESFL7), found in Arabidopsis thaliana (Mouse-ear cress).